Here is a 165-residue protein sequence, read N- to C-terminus: 2-C-methyl-D-erythritol 2,4-cyclodiphosphate synthase (165 aa).

Positions 13 and 15 each coordinate a divalent metal cation. 4-CDP-2-C-methyl-D-erythritol 2-phosphate is bound by residues aspartate 13 to histidine 15 and histidine 39 to serine 40. Residue histidine 47 coordinates a divalent metal cation. 4-CDP-2-C-methyl-D-erythritol 2-phosphate-binding positions include aspartate 61–glycine 63 and phenylalanine 141.

This sequence belongs to the IspF family. As to quaternary structure, homotrimer. A divalent metal cation serves as cofactor.

It catalyses the reaction 4-CDP-2-C-methyl-D-erythritol 2-phosphate = 2-C-methyl-D-erythritol 2,4-cyclic diphosphate + CMP. It participates in isoprenoid biosynthesis; isopentenyl diphosphate biosynthesis via DXP pathway; isopentenyl diphosphate from 1-deoxy-D-xylulose 5-phosphate: step 4/6. In terms of biological role, involved in the biosynthesis of isopentenyl diphosphate (IPP) and dimethylallyl diphosphate (DMAPP), two major building blocks of isoprenoid compounds. Catalyzes the conversion of 4-diphosphocytidyl-2-C-methyl-D-erythritol 2-phosphate (CDP-ME2P) to 2-C-methyl-D-erythritol 2,4-cyclodiphosphate (ME-CPP) with a corresponding release of cytidine 5-monophosphate (CMP). This chain is 2-C-methyl-D-erythritol 2,4-cyclodiphosphate synthase, found in Thermotoga maritima (strain ATCC 43589 / DSM 3109 / JCM 10099 / NBRC 100826 / MSB8).